A 91-amino-acid polypeptide reads, in one-letter code: MARVTVQEAADKIGNRFDLILTAARRARQLQLHAREPLVPEENDKPTVIALREIEKGLINGQIMDQLENNDAIQQEVAEQEAISFLADVQG.

Belongs to the RNA polymerase subunit omega family. In terms of assembly, the RNAP catalytic core consists of 2 alpha, 1 beta, 1 beta' and 1 omega subunit. When a sigma factor is associated with the core the holoenzyme is formed, which can initiate transcription.

It catalyses the reaction RNA(n) + a ribonucleoside 5'-triphosphate = RNA(n+1) + diphosphate. Its function is as follows. Promotes RNA polymerase assembly. Latches the N- and C-terminal regions of the beta' subunit thereby facilitating its interaction with the beta and alpha subunits. The sequence is that of DNA-directed RNA polymerase subunit omega from Actinobacillus pleuropneumoniae serotype 5b (strain L20).